We begin with the raw amino-acid sequence, 192 residues long: Akirin-1 (192 aa).

The interval 17-71 (LLSPGSPKRRRCAPLPGPTPGLRPPDAEPPPPFQTQTPPQSLQQPAPPGSERRLP) is disordered. S22 carries the phosphoserine modification. The short motif at 23-28 (PKRRRC) is the Nuclear localization signal element. Residues 31 to 49 (LPGPTPGLRPPDAEPPPPF) are compositionally biased toward pro residues. Residues 50–60 (QTQTPPQSLQQ) show a composition bias toward low complexity. Phosphothreonine is present on T72. A compositionally biased stretch (polar residues) spans 104–122 (ASESQPHSSALTAPSSPGS). The segment at 104 to 127 (ASESQPHSSALTAPSSPGSSWMKK) is disordered. The short motif at 189 to 192 (SYVS) is the SYVS motif element.

It belongs to the akirin family. As to expression, widely expressed with the highest expression in heart, liver, placenta and peripheral blood leukocytes.

It localises to the nucleus. In terms of biological role, molecular adapter that acts as a bridge between proteins, and which is involved skeletal muscle development. Functions as a signal transducer for MSTN during skeletal muscle regeneration and myogenesis. May regulate chemotaxis of both macrophages and myoblasts by reorganising actin cytoskeleton, leading to more efficient lamellipodia formation via a PI3 kinase dependent pathway. In contrast to AKIRIN2, not involved in nuclear import of proteasomes. This is Akirin-1 from Homo sapiens (Human).